A 403-amino-acid polypeptide reads, in one-letter code: Nucleoporin nup44 (403 aa).

Polar residues-rich tracts occupy residues Met1–Pro31 and Phe67–Asn124. The interval Met1–Asn124 is disordered.

The protein resides in the cytoplasm. It is found in the nucleus. Functions as a component of the nuclear pore complex (NPC). NPC components, collectively referred to as nucleoporins (NUPs), can play the role of both NPC structural components and of docking or interaction partners for transiently associated nuclear transport factors. Active directional transport is assured by both, a Phe-Gly (FG) repeat affinity gradient for these transport factors across the NPC and a transport cofactor concentration gradient across the nuclear envelope. This Schizosaccharomyces pombe (strain 972 / ATCC 24843) (Fission yeast) protein is Nucleoporin nup44 (nup44).